Reading from the N-terminus, the 73-residue chain is Putative membrane protein insertion efficiency factor (73 aa).

The protein belongs to the UPF0161 family.

Its subcellular location is the cell inner membrane. Its function is as follows. Could be involved in insertion of integral membrane proteins into the membrane. This Parabacteroides distasonis (strain ATCC 8503 / DSM 20701 / CIP 104284 / JCM 5825 / NCTC 11152) protein is Putative membrane protein insertion efficiency factor.